Consider the following 224-residue polypeptide: UPF0758 protein NE1464 (224 aa).

The MPN domain occupies 102–224; it reads IMDSPQSVRN…VVSFAERGLI (123 aa). Zn(2+) contacts are provided by histidine 173, histidine 175, and aspartate 186. Residues 173-186 carry the JAMM motif motif; sequence HNHPSGIAEPSTAD.

The protein belongs to the UPF0758 family.

The protein is UPF0758 protein NE1464 of Nitrosomonas europaea (strain ATCC 19718 / CIP 103999 / KCTC 2705 / NBRC 14298).